Consider the following 328-residue polypeptide: Glucokinase (328 aa).

16–21 (ADIGGT) is an ATP binding site.

This sequence belongs to the bacterial glucokinase family.

It is found in the cytoplasm. It catalyses the reaction D-glucose + ATP = D-glucose 6-phosphate + ADP + H(+). This is Glucokinase from Neisseria gonorrhoeae (strain ATCC 700825 / FA 1090).